The chain runs to 466 residues: Citrate synthase, mitochondrial (466 aa).

Residues 1–27 (MALLTAAARLLGTKNASCLVLAARHAS) constitute a mitochondrion transit peptide. An SIFI-degron motif is present at residues 2-21 (ALLTAAARLLGTKNASCLVL). At Lys-57 the chain carries N6-succinyllysine. Lys-76 is subject to N6-acetyllysine; alternate. Lys-76 is subject to N6-succinyllysine; alternate. An N6-succinyllysine mark is found at Lys-103 and Lys-193. Residue His-301 is part of the active site. N6-acetyllysine; alternate occurs at positions 321 and 327. Lys-321 and Lys-327 each carry N6-succinyllysine; alternate. Residue His-347 is part of the active site. Arg-356 is an oxaloacetate binding site. N6-acetyllysine; alternate is present on Lys-375. An N6-succinyllysine; alternate modification is found at Lys-375. Lys-382 carries the post-translational modification N6-acetyllysine. An N6-acetyllysine; alternate modification is found at Lys-393. At Lys-393 the chain carries N6-succinyllysine; alternate. Lys-395 is subject to N6,N6,N6-trimethyllysine. Asp-402 is an active-site residue. 2 residues coordinate oxaloacetate: Arg-428 and Arg-448. Lys-450 carries the N6-succinyllysine modification. An N6-acetyllysine; alternate modification is found at Lys-459. The residue at position 459 (Lys-459) is an N6-succinyllysine; alternate.

Belongs to the citrate synthase family. Homodimer. Methylated. Trimethylation at Lys-395 by CSKMT decreases citrate synthase activity. In terms of processing, in response to mitochondrial stress, the precursor protein is ubiquitinated by the SIFI complex in the cytoplasm before mitochondrial import, leading to its degradation. Within the SIFI complex, UBR4 initiates ubiquitin chain that are further elongated or branched by KCMF1.

The protein resides in the mitochondrion matrix. It catalyses the reaction oxaloacetate + acetyl-CoA + H2O = citrate + CoA + H(+). It functions in the pathway carbohydrate metabolism; tricarboxylic acid cycle; isocitrate from oxaloacetate: step 1/2. Its function is as follows. Key enzyme of the Krebs tricarboxylic acid cycle which catalyzes the synthesis of citrate from acetyl coenzyme A and oxaloacetate. The sequence is that of Citrate synthase, mitochondrial (CS) from Homo sapiens (Human).